Here is a 72-residue protein sequence, read N- to C-terminus: Brevinin-2GHc (72 aa).

Positions 1–22 (MFTMKKSLLLLFFLGMISLSLC) are cleaved as a signal peptide. A propeptide spanning residues 23–42 (EQERGADEDEGEVEEQIKRS) is cleaved from the precursor. Cys64 and Cys70 are oxidised to a cystine.

Expressed by the skin glands.

The protein resides in the secreted. Its function is as follows. Antimicrobial peptide. Active against the Gram-positive bacteria S.aureus FDA209P (MIC=9.8 ug/ml) and B.subtilis ATCC 6633 (MIC&gt;64 ug/ml), and the Gram-negative bacteria E.coli O111 (MIC=19.6 ug/ml) and E.coli ATCC 25922 (MIC=9.8 ug/ml). Not active against the fungus C.albicans. The protein is Brevinin-2GHc of Sylvirana guentheri (Gunther's frog).